Consider the following 289-residue polypeptide: Acetyl-coenzyme A carboxylase carboxyl transferase subunit beta 2 (289 aa).

Positions 25–289 (VWTKCPSCDQ…TNTSIRLEVK (265 aa)) constitute a CoA carboxyltransferase N-terminal domain. Zn(2+) contacts are provided by C29, C32, C48, and C51. The C4-type zinc-finger motif lies at 29–51 (CPSCDQVLYRIALKENLEVCPKC).

Belongs to the AccD/PCCB family. As to quaternary structure, acetyl-CoA carboxylase is a heterohexamer composed of biotin carboxyl carrier protein (AccB), biotin carboxylase (AccC) and two subunits each of ACCase subunit alpha (AccA) and ACCase subunit beta (AccD). Requires Zn(2+) as cofactor.

It localises to the cytoplasm. The catalysed reaction is N(6)-carboxybiotinyl-L-lysyl-[protein] + acetyl-CoA = N(6)-biotinyl-L-lysyl-[protein] + malonyl-CoA. It participates in lipid metabolism; malonyl-CoA biosynthesis; malonyl-CoA from acetyl-CoA: step 1/1. In terms of biological role, component of the acetyl coenzyme A carboxylase (ACC) complex. Biotin carboxylase (BC) catalyzes the carboxylation of biotin on its carrier protein (BCCP) and then the CO(2) group is transferred by the transcarboxylase to acetyl-CoA to form malonyl-CoA. This Vibrio parahaemolyticus serotype O3:K6 (strain RIMD 2210633) protein is Acetyl-coenzyme A carboxylase carboxyl transferase subunit beta 2.